Reading from the N-terminus, the 229-residue chain is Peroxiredoxin-like 2A (229 aa).

Positions 14-112 (MWSIGVGAFG…DELGVPLYAV (99 aa)) are thioredoxin fold. Active-site redox-active residues include C85 and C88.

This sequence belongs to the peroxiredoxin-like PRXL2 family. PRXL2A subfamily. In terms of tissue distribution, expressed by the principal cells of the epididymis. Detected in the head region of epididymal sperm (at protein level). Expressed in bone marrow.

The protein localises to the cytoplasm. It localises to the secreted. Involved in redox regulation of the cell. Acts as an antioxidant. Inhibits TNFSF11-induced NFKB1 and JUN activation and osteoclast differentiation. May affect bone resorption and help to maintain bone mass. Acts as a negative regulator of macrophage-mediated inflammation by inhibiting macrophage production of inflammatory cytokines, probably through suppression of the MAPK signaling pathway. This is Peroxiredoxin-like 2A from Rattus norvegicus (Rat).